An 86-amino-acid chain; its full sequence is Acyl carrier protein (86 aa).

The 79-residue stretch at 7-85 folds into the Carrier domain; the sequence is SKVDNIEQKV…DVVNYIKEHK (79 aa). The residue at position 45 (S45) is an O-(pantetheine 4'-phosphoryl)serine.

This sequence belongs to the acyl carrier protein (ACP) family. In terms of processing, 4'-phosphopantetheine is transferred from CoA to a specific serine of apo-ACP by AcpS. This modification is essential for activity because fatty acids are bound in thioester linkage to the sulfhydryl of the prosthetic group.

The protein localises to the cytoplasm. The protein operates within lipid metabolism; fatty acid biosynthesis. Carrier of the growing fatty acid chain in fatty acid biosynthesis. The protein is Acyl carrier protein of Rickettsia bellii (strain RML369-C).